The sequence spans 252 residues: Imidazole glycerol phosphate synthase subunit HisF (252 aa).

Residues Asp11 and Asp130 contribute to the active site.

Belongs to the HisA/HisF family. Heterodimer of HisH and HisF.

It localises to the cytoplasm. The enzyme catalyses 5-[(5-phospho-1-deoxy-D-ribulos-1-ylimino)methylamino]-1-(5-phospho-beta-D-ribosyl)imidazole-4-carboxamide + L-glutamine = D-erythro-1-(imidazol-4-yl)glycerol 3-phosphate + 5-amino-1-(5-phospho-beta-D-ribosyl)imidazole-4-carboxamide + L-glutamate + H(+). The protein operates within amino-acid biosynthesis; L-histidine biosynthesis; L-histidine from 5-phospho-alpha-D-ribose 1-diphosphate: step 5/9. Its function is as follows. IGPS catalyzes the conversion of PRFAR and glutamine to IGP, AICAR and glutamate. The HisF subunit catalyzes the cyclization activity that produces IGP and AICAR from PRFAR using the ammonia provided by the HisH subunit. The protein is Imidazole glycerol phosphate synthase subunit HisF of Streptococcus gordonii (strain Challis / ATCC 35105 / BCRC 15272 / CH1 / DL1 / V288).